The following is a 367-amino-acid chain: Alginate lyase (367 aa).

An N-terminal signal peptide occupies residues 1–27 (MKTSHLIRITLPGALAAALLASQVSQA). Substrate is bound by residues 65–66 (SK), 138–139 (HT), and Y256.

It belongs to the polysaccharide lyase 5 family.

The protein resides in the periplasm. It catalyses the reaction Eliminative cleavage of alginate to give oligosaccharides with 4-deoxy-alpha-L-erythro-hex-4-enuronosyl groups at their non-reducing ends and beta-D-mannuronate at their reducing end.. Functionally, catalyzes the depolymerization of alginate by cleaving the beta-1,4 glycosidic bond between two adjacent sugar residues via a beta-elimination mechanism. May serve to degrade mislocalized alginate that is trapped in the periplasmic space. This Pseudomonas paraeruginosa (strain DSM 24068 / PA7) (Pseudomonas aeruginosa (strain PA7)) protein is Alginate lyase.